The primary structure comprises 344 residues: DNA-directed RNA polymerase subunit alpha (344 aa).

The interval 1–238 is alpha N-terminal domain (alpha-NTD); sequence MKVIKTAPLI…KQLGVFGERP (238 aa). Residues 254–344 form an alpha C-terminal domain (alpha-CTD) region; the sequence is AKDLSAKIES…EKLEDKGGND (91 aa).

Belongs to the RNA polymerase alpha chain family. Homodimer. The RNAP catalytic core consists of 2 alpha, 1 beta, 1 beta' and 1 omega subunit. When a sigma factor is associated with the core the holoenzyme is formed, which can initiate transcription.

The enzyme catalyses RNA(n) + a ribonucleoside 5'-triphosphate = RNA(n+1) + diphosphate. DNA-dependent RNA polymerase catalyzes the transcription of DNA into RNA using the four ribonucleoside triphosphates as substrates. The sequence is that of DNA-directed RNA polymerase subunit alpha from Helicobacter pylori (strain ATCC 700392 / 26695) (Campylobacter pylori).